Here is a 118-residue protein sequence, read N- to C-terminus: Heavy metal-associated isoprenylated plant protein 12 (118 aa).

Positions 1-65 (MQVVVLKLDV…KICHTEFISV (65 aa)) constitute an HMA domain. The segment at 68–87 (VKEPEKKKPDDPKKPETKPP) is disordered. A compositionally biased stretch (basic and acidic residues) spans 69-86 (KEPEKKKPDDPKKPETKP). Position 115 is a cysteine methyl ester (Cys115). Cys115 carries the S-farnesyl cysteine lipid modification. A propeptide spans 116–118 (VTS) (removed in mature form).

The protein belongs to the HIPP family.

Probable heavy-metal-binding protein. This is Heavy metal-associated isoprenylated plant protein 12 from Arabidopsis thaliana (Mouse-ear cress).